The primary structure comprises 115 residues: T cell receptor beta variable 7-6 (115 aa).

Residues 1 to 21 (MGTSLLCWVVLGFLGTDHTGA) form the signal peptide. The Ig-like domain maps to 22 to 115 (GVSQSPRYKV…SAMYRCASSL (94 aa)). Cysteines 42 and 111 form a disulfide.

As to quaternary structure, alpha-beta TR is a heterodimer composed of an alpha and beta chain; disulfide-linked. The alpha-beta TR is associated with the transmembrane signaling CD3 coreceptor proteins to form the TR-CD3 (TcR or TCR). The assembly of alpha-beta TR heterodimers with CD3 occurs in the endoplasmic reticulum where a single alpha-beta TR heterodimer associates with one CD3D-CD3E heterodimer, one CD3G-CD3E heterodimer and one CD247 homodimer forming a stable octameric structure. CD3D-CD3E and CD3G-CD3E heterodimers preferentially associate with TR alpha and TR beta chains, respectively. The association of the CD247 homodimer is the last step of TcR assembly in the endoplasmic reticulum and is required for transport to the cell surface.

It localises to the cell membrane. V region of the variable domain of T cell receptor (TR) beta chain that participates in the antigen recognition. Alpha-beta T cell receptors are antigen specific receptors which are essential to the immune response and are present on the cell surface of T lymphocytes. Recognize peptide-major histocompatibility (MH) (pMH) complexes that are displayed by antigen presenting cells (APC), a prerequisite for efficient T cell adaptive immunity against pathogens. Binding of alpha-beta TR to pMH complex initiates TR-CD3 clustering on the cell surface and intracellular activation of LCK that phosphorylates the ITAM motifs of CD3G, CD3D, CD3E and CD247 enabling the recruitment of ZAP70. In turn ZAP70 phosphorylates LAT, which recruits numerous signaling molecules to form the LAT signalosome. The LAT signalosome propagates signal branching to three major signaling pathways, the calcium, the mitogen-activated protein kinase (MAPK) kinase and the nuclear factor NF-kappa-B (NF-kB) pathways, leading to the mobilization of transcription factors that are critical for gene expression and essential for T cell growth and differentiation. The T cell repertoire is generated in the thymus, by V-(D)-J rearrangement. This repertoire is then shaped by intrathymic selection events to generate a peripheral T cell pool of self-MH restricted, non-autoaggressive T cells. Post-thymic interaction of alpha-beta TR with the pMH complexes shapes TR structural and functional avidity. This Homo sapiens (Human) protein is T cell receptor beta variable 7-6.